We begin with the raw amino-acid sequence, 26 residues long: Neprilysin (26 aa).

The protein belongs to the peptidase M13 family. Requires Zn(2+) as cofactor.

The protein resides in the cell membrane. It carries out the reaction Preferential cleavage of polypeptides between hydrophobic residues, particularly with Phe or Tyr at P1'.. It catalyses the reaction substance P + H2O = substance P(1-9) + L-Leu-L-Met-NH2. The enzyme catalyses substance P + H2O = substance P(1-7) + L-Phe-Gly-L-Leu-L-Met-NH2. The catalysed reaction is neurotensin + H2O = neurotensin(1-11) + L-isoleucyl-L-leucine. It carries out the reaction neurotensin + H2O = neurotensin(1-10) + L-tyrosyl-L-isoleucyl-L-leucine. In terms of biological role, thermolysin-like specificity, but is almost confined on acting on polypeptides of up to 30 amino acids. Biologically important in the destruction of opioid peptides such as Met- and Leu-enkephalins by cleavage of a Gly-Phe bond. Catalyzes cleavage of bradykinin, substance P and neurotensin peptides. Able to cleave angiotensin-1, angiotensin-2 and angiotensin 1-9. Involved in the degradation of atrial natriuretic factor (ANF) and brain natriuretic factor (BNP(1-32)). Displays UV-inducible elastase activity toward skin preelastic and elastic fibers. The sequence is that of Neprilysin (MME) from Sus scrofa (Pig).